The primary structure comprises 171 residues: Protein hunchback (171 aa).

2 disordered regions span residues 14 to 93 (PMSH…PMQI) and 124 to 171 (SNDK…KYMA). Positions 17-31 (HHHHHSHHSHGHHHS) are enriched in basic residues. Composition is skewed to low complexity over residues 32-42 (NSNSNASSPRQ) and 52-80 (SSSN…DTPL). Positions 152-171 (EPEKDHDLMSNSSEDMKYMA) are enriched in basic and acidic residues.

The protein belongs to the hunchback C2H2-type zinc-finger protein family.

The protein resides in the nucleus. Functionally, gap class segmentation protein that controls development of head structures. The chain is Protein hunchback (hb) from Scaptomyza albovittata (Fruit fly).